The sequence spans 180 residues: Interleukin-1-binding protein (180 aa).

A signal peptide spans 1 to 20 (MSILPVIFLPIFFYSPFVQT). N-linked (GlcNAc...) asparagine; by host glycosylation is found at Asn80, Asn103, and Asn113.

It belongs to the interleukin-1 receptor family. As to quaternary structure, interacts with mouse Il1b.

Its subcellular location is the secreted. Functionally, may reduce the host inflammatory response by interacting with inteleukin-1 beta (Il1b) and thus decreasing the association between IL1B and its cellular receptor. This chain is Interleukin-1-binding protein (OPG201), found in Monkeypox virus.